The following is a 1445-amino-acid chain: MAESAKLLFYNKVIDGTAIKQFIGRLVAHFGITYTAHILDQLKTLGFQQATYAATSLGIDDLLTAPSKGWLIQDAEHHSYTLEKHHRYGNVHAVEKLRQLIETWYATSEYLKQEMNPNFRMTDPLNPVHMMSFSGARGSASQVHQLVGMRGLVSDPQGQIIDLPIKSNFREGLSLTEYIISCYGARKGVVDTAVRTSDAGYLTRRLVEVVQHIVVRKTDCNTFRGISLNSTEDKKKNLQIFTQQKLVGRVLADNLYINARCLAIRNQDINTNLIEKLITLKTPLISIRSPLTCKSMLWICQLCYGWSLTHYGDLVELGEAVGIIAGQSIGEPGTQLTLRTFHTGGVFTGDIAEHVRTPFNGTIEFDTDLVYPTRTRHGHPAWVCRTDLAVTIKSQNKIHNLIIPSQSLLLIQNNQYVESKQLIAEVHAKVSPFKEKVQKYIYCNIEGEMHWSKRVRHASKYLHSNVHLIFNTGHLWILSGSSHEDKTSSMFFKNQDQINTKFFISPRKILFMKKTNQVNSKNLDPYLEKEMETLNYSNLYLGILNKSRNFVYPSIILHDYEVKRIYDEKKGENFLLLEERHGEKKTQIFRRFVLNIPKSGILENKDIFAISNDPGYGIQSPGIIKYGTIKVNPIKGKGETFKNRETKILRLRPRYQVIEPGNFFPIPEEVHILYESFPPILVRNDSLIKKNTQITSDIRSQVGGLVRIRRKMNDSYEVKVLPGRVYHPEERRNISKQNDILVPPGEEISNKFQSENWLYLEWITPPKEKPFIFIRPAIEFIVPEETDLAETFTLNSQKKQEILKVKKIRYLLYEDGEEVEVTNKTGIQLIQTGLVLDWKEDSSIKKVYASLTEIETNGLSKKFLQISLIEHPIFEIEKKKNNVNLKYLFTNEINYSSHSFNYENGLFNGYRGIIRISSNENQEDKSLPILSPFDFVQIFLSKNSEEYTPEMKDEGNFNLDTNSIFYAKSFVKKFNQNSITSSQNSSGTFINKEFYNHNNINQEFNSRKIIRNFFLSIERNFMEILLLRKLGLLGNSHSLPSPFQFSCWANTHNQPIINRYSILENLRDVFQVPKWYFFDENKKTHKLDLSKNSIYHLLTWSFSIALSYEEGAIHLVGLGQFICENISISSKYQTISESGQIIAIHPEFLVVRLAKPSLATGGATIHSHYGQIIKKGDVLITLVYERLKSGDIIQGLPKVEQLLEARPINSTSINLENGFENWNRDMTKSLGSLWGFLLSAKTTMNQSQINLVDQIQEVYQSQGVYISDKHIEIVVRQMTSKVLTLEDGMANGFLPGELIESSRAQRMNRVLEESVLYKPILLGITKASLNTQSFISEASFQETTRVLAKAALRGRIDWLKGLKENVIFGGVISAGTGCQEVVWQVILEKRKETYSKRKKNKLFSGRVRDVFSYYQRILFFPTMKIIHKTLKKPLSEINLDPNYRK.

Residues Cys220, Cys293, Cys300, and Cys303 each coordinate Zn(2+).

The protein belongs to the RNA polymerase beta' chain family. RpoC2 subfamily. In plastids the minimal PEP RNA polymerase catalytic core is composed of four subunits: alpha, beta, beta', and beta''. When a (nuclear-encoded) sigma factor is associated with the core the holoenzyme is formed, which can initiate transcription. Requires Zn(2+) as cofactor.

It localises to the plastid. Its subcellular location is the chloroplast. It carries out the reaction RNA(n) + a ribonucleoside 5'-triphosphate = RNA(n+1) + diphosphate. Its function is as follows. DNA-dependent RNA polymerase catalyzes the transcription of DNA into RNA using the four ribonucleoside triphosphates as substrates. In Anthoceros angustus (Hornwort), this protein is DNA-directed RNA polymerase subunit beta''.